The primary structure comprises 479 residues: U6 small nuclear RNA (adenine-(43)-N(6))-methyltransferase (479 aa).

S-adenosyl-L-methionine contacts are provided by Lys-82, Gly-108, Asp-131, Thr-164, and Asn-184. The tract at residues 420–424 (DNASQ) is involved in dlc-1 binding.

Belongs to the methyltransferase superfamily. METTL16/RlmF family. In terms of assembly, self-associates. Interacts with dlc-1; the interaction is direct, and is required for nuclear localization of mett-10. Expressed in the intestine, vulva, and cells of the somatic gonad including distal tip cells, gonadal sheath cells and spermatheca.

It is found in the nucleus. It catalyses the reaction an adenosine in mRNA + S-adenosyl-L-methionine = an N(6)-methyladenosine in mRNA + S-adenosyl-L-homocysteine + H(+). The catalysed reaction is adenosine in U6 snRNA + S-adenosyl-L-methionine = N(6)-methyladenosine in U6 snRNA + S-adenosyl-L-homocysteine + H(+). Functionally, RNA N6-methyltransferase that methylates adenosine residues at the N(6) position of a subset of RNAs and is involved in S-adenosyl-L-methionine homeostasis by regulating splicing of S-adenosylmethionine synthase transcripts (sams-3, sams-4 and sams-5). Able to N6-methylate a subset of mRNAs containing the 5'UACAGAAAC-3' nonamer sequence. Plays a key role in S-adenosyl-L-methionine homeostasis: under rich-diet conditions, catalyzes N6-methylation of S-adenosylmethionine synthase mRNAs (sams-3, sams-4 and sams-5), directly inhibiting splicing and protein production of S-adenosylmethionine synthase. In addition to mRNAs, also able to mediate N6-methylation of U6 small nuclear RNA (U6 snRNA). Required for gamete production, inhibiting germ cell proliferative fate and ensuring germ cell meiotic development. Also promotes progression of the mitotic cell cycle in those germ cells that continue to proliferate. Plays a role in the development of the vulva, somatic gonad and embryo. The protein is U6 small nuclear RNA (adenine-(43)-N(6))-methyltransferase of Caenorhabditis elegans.